Reading from the N-terminus, the 92-residue chain is Small ribosomal subunit protein uS19 (92 aa).

It belongs to the universal ribosomal protein uS19 family.

Functionally, protein S19 forms a complex with S13 that binds strongly to the 16S ribosomal RNA. The polypeptide is Small ribosomal subunit protein uS19 (Staphylococcus carnosus (strain TM300)).